We begin with the raw amino-acid sequence, 401 residues long: Probable 2,3-bisphosphoglycerate-independent phosphoglycerate mutase (401 aa).

This sequence belongs to the BPG-independent phosphoglycerate mutase family. A-PGAM subfamily.

It catalyses the reaction (2R)-2-phosphoglycerate = (2R)-3-phosphoglycerate. Its pathway is carbohydrate degradation; glycolysis; pyruvate from D-glyceraldehyde 3-phosphate: step 3/5. Functionally, catalyzes the interconversion of 2-phosphoglycerate and 3-phosphoglycerate. The sequence is that of Probable 2,3-bisphosphoglycerate-independent phosphoglycerate mutase from Thermotoga neapolitana (strain ATCC 49049 / DSM 4359 / NBRC 107923 / NS-E).